Reading from the N-terminus, the 184-residue chain is ADP-ribosylation factor-like protein 2 (184 aa).

The N-myristoyl glycine moiety is linked to residue glycine 2. GTP contacts are provided by residues 23–30 (GLDNAGKT), 66–70 (DVGGQ), glycine 68, and 125–128 (NKSD).

It belongs to the small GTPase superfamily. Arf family.

It is found in the cytoplasm. It localises to the cell membrane. The protein localises to the cytoskeleton. The protein resides in the microtubule organizing center. Its subcellular location is the centrosome. Its function is as follows. GTP-binding protein that functions in embryogenesis, cytokinesis, germline development and microtubulule cytoskeleton dynamics. The polypeptide is ADP-ribosylation factor-like protein 2 (evl-20.1) (Caenorhabditis briggsae).